We begin with the raw amino-acid sequence, 99 residues long: Keratinocyte differentiation-associated protein (99 aa).

A signal peptide spans 1–22; sequence MKIPVLPAVVLLSLLALHSAQG.

In terms of tissue distribution, highly expressed in skin, but not detectable in any other tissue examined. Expression restricted to cornified/stratified epithelia and not detected in non-cornified/stratified epithelia.

Its subcellular location is the secreted. Functionally, may act as a soluble regulator of keratinocyte differentiation. May play an important role in embryonic skin morphogenesis. This Canis lupus familiaris (Dog) protein is Keratinocyte differentiation-associated protein.